A 447-amino-acid chain; its full sequence is ATP-dependent protease ATPase subunit HslU (447 aa).

ATP contacts are provided by residues Ile18, 60–65 (GVGKTE), Asp259, Glu325, and Arg397.

This sequence belongs to the ClpX chaperone family. HslU subfamily. A double ring-shaped homohexamer of HslV is capped on each side by a ring-shaped HslU homohexamer. The assembly of the HslU/HslV complex is dependent on binding of ATP.

The protein resides in the cytoplasm. ATPase subunit of a proteasome-like degradation complex; this subunit has chaperone activity. The binding of ATP and its subsequent hydrolysis by HslU are essential for unfolding of protein substrates subsequently hydrolyzed by HslV. HslU recognizes the N-terminal part of its protein substrates and unfolds these before they are guided to HslV for hydrolysis. This chain is ATP-dependent protease ATPase subunit HslU, found in Burkholderia ambifaria (strain ATCC BAA-244 / DSM 16087 / CCUG 44356 / LMG 19182 / AMMD) (Burkholderia cepacia (strain AMMD)).